A 132-amino-acid polypeptide reads, in one-letter code: UPF0299 membrane protein YohJ (132 aa).

A run of 4 helical transmembrane segments spans residues 7 to 27, 31 to 51, 63 to 83, and 93 to 113; these read IIWQ…AGIF, LLPV…VLLA, GCYV…VGVM, and FGPV…VVSW.

It belongs to the UPF0299 family.

The protein localises to the cell inner membrane. This is UPF0299 membrane protein YohJ from Shigella boydii serotype 4 (strain Sb227).